Consider the following 889-residue polypeptide: Chitin synthase I (889 aa).

N-linked (GlcNAc...) asparagine glycosylation is present at N43. Residues 94-138 (GEYFDGYNQGHPPQEHQAYDDDGQPLIEDQHGYSDNPQHQTQTPA) are disordered. A compositionally biased stretch (polar residues) spans 126–137 (YSDNPQHQTQTP). Residue N199 is glycosylated (N-linked (GlcNAc...) asparagine). The next 9 helical transmembrane spans lie at 431–451 (SAFG…YVAL), 530–550 (RWLN…YEFF), 560–580 (LAFF…WFAI), 606–626 (ILGV…FVLS), 641–661 (MVWF…FIAV), 687–707 (TLII…IIMF), 716–736 (FIQY…YAFC), 815–835 (GVVL…LSSA), and 861–881 (IVLW…MWFL).

The protein belongs to the chitin synthase family. Class I subfamily. In terms of tissue distribution, expressed in hyphal bodies.

The protein resides in the cell membrane. The catalysed reaction is [(1-&gt;4)-N-acetyl-beta-D-glucosaminyl](n) + UDP-N-acetyl-alpha-D-glucosamine = [(1-&gt;4)-N-acetyl-beta-D-glucosaminyl](n+1) + UDP + H(+). Functionally, polymerizes chitin, a structural polymer of the cell wall and septum, by transferring the sugar moiety of UDP-GlcNAc to the non-reducing end of the growing chitin polymer. Contributes to the production of conidia and the ability of fungal conidia to germinate. Not involved in fungal stress tolerances. This Metarhizium acridum (strain CQMa 102) protein is Chitin synthase I.